Here is a 75-residue protein sequence, read N- to C-terminus: MYB-like transcription factor ETC3 (75 aa).

The tract at residues 1–20 (MDNHRRTKQPKTNSIVTSSS) is disordered. Positions 34–71 (SQEEEDLVSRMHKLVGDRWELIAGRIPGRTAGEIERFW) constitute a Myb-like domain.

In terms of tissue distribution, expressed in leaf epidermal cells, stomate guard cells in leaves, cotyledons and hypocotyls, inflorescences, developing seeds and siliques.

The protein resides in the nucleus. Functionally, MYB-type transcription factor involved in epidermal cell fate specification. Acts as a negative regulator of trichome development, including endoreplication, by mediating lateral inhibition. Promotes the formation of hair developing cells in H position in root epidermis, probably by inhibiting non-hair cell formation. May have pleiotropic effects on flowering development and epidermal cell size through the regulation of endoreduplication. The sequence is that of MYB-like transcription factor ETC3 (ETC3) from Arabidopsis thaliana (Mouse-ear cress).